The following is a 251-amino-acid chain: Triosephosphate isomerase (251 aa).

9 to 11 (NWK) contributes to the substrate binding site. The active-site Electrophile is His93. Glu163 serves as the catalytic Proton acceptor. Substrate is bound by residues Gly169, Ser209, and 230-231 (GG).

It belongs to the triosephosphate isomerase family. Homodimer.

It is found in the cytoplasm. The enzyme catalyses D-glyceraldehyde 3-phosphate = dihydroxyacetone phosphate. The protein operates within carbohydrate biosynthesis; gluconeogenesis. Its pathway is carbohydrate degradation; glycolysis; D-glyceraldehyde 3-phosphate from glycerone phosphate: step 1/1. Involved in the gluconeogenesis. Catalyzes stereospecifically the conversion of dihydroxyacetone phosphate (DHAP) to D-glyceraldehyde-3-phosphate (G3P). This Ruegeria pomeroyi (strain ATCC 700808 / DSM 15171 / DSS-3) (Silicibacter pomeroyi) protein is Triosephosphate isomerase.